Here is a 314-residue protein sequence, read N- to C-terminus: Aryldialkylphosphatase (314 aa).

His22, His24, and Lys137 together coordinate Fe cation. Lys137, His170, and His199 together coordinate Co(2+). An N6-carboxylysine modification is found at Lys137. Asp256 lines the Fe cation pocket.

Belongs to the metallo-dependent hydrolases superfamily. Phosphotriesterase family. As to quaternary structure, homodimer. It depends on Co(2+) as a cofactor. Fe cation is required as a cofactor.

The enzyme catalyses An aryl dialkyl phosphate + H2O = dialkyl phosphate + an aryl alcohol.. Inactivated by EDTA and o-phenanthroline. Its function is as follows. Has a low paraoxonase activity. Also active, but with a lower activity, against other organo-phosphorus insecticides such as Dursban, Coumaphos, pNP-butanoate or parathion. The chain is Aryldialkylphosphatase (php) from Saccharolobus solfataricus (strain ATCC 35092 / DSM 1617 / JCM 11322 / P2) (Sulfolobus solfataricus).